The primary structure comprises 212 residues: Cell division protein YtfB (212 aa).

The chain crosses the membrane as a helical span at residues 34–50 (GIIIAAIVLVVGFLLPS). The disordered stretch occupies residues 88–127 (NDPDQVAPVAPEPIQEGQPEEQPQTTQTQPFQPDSGIDNQ). A compositionally biased stretch (low complexity) spans 99–120 (EPIQEGQPEEQPQTTQTQPFQP). The tract at residues 117-212 (PFQPDSGIDN…QPDGSFIRAR (96 aa)) is oapA.

Belongs to the OapA family.

It is found in the cell inner membrane. In terms of biological role, cell division protein whose function is related to the generation of a transient cell wall structure. Function is linked to the late stages of cell division. This chain is Cell division protein YtfB (ytfB), found in Escherichia coli (strain K12).